Consider the following 294-residue polypeptide: Nucleoside-specific channel-forming protein Tsx (294 aa).

The signal sequence occupies residues 1–22 (MKKTLLAASAVVALSASFTAGA).

Belongs to the nucleoside-specific channel-forming outer membrane porin (Tsx) (TC 1.B.10) family.

It is found in the cell outer membrane. Its function is as follows. Functions as a substrate-specific channel for nucleosides and deoxynucleosides. Also functions in albicidin uptake and as receptor for colicin K. Also is a receptor for several Tsx-specific bacteriophages. The sequence is that of Nucleoside-specific channel-forming protein Tsx from Klebsiella aerogenes (strain ATCC 13048 / DSM 30053 / CCUG 1429 / JCM 1235 / KCTC 2190 / NBRC 13534 / NCIMB 10102 / NCTC 10006 / CDC 819-56) (Enterobacter aerogenes).